The primary structure comprises 131 residues: Profilin-4 (131 aa).

Cysteines 13 and 115 form a disulfide. Residues 81–97 carry the Involved in PIP2 interaction motif; it reads AVIRGKKGAGGITVKKT. A Phosphothreonine modification is found at threonine 111.

This sequence belongs to the profilin family. Occurs in many kinds of cells as a complex with monomeric actin in a 1:1 ratio. In terms of processing, phosphorylated by MAP kinases.

Its subcellular location is the cytoplasm. The protein localises to the cytoskeleton. Binds to actin and affects the structure of the cytoskeleton. At high concentrations, profilin prevents the polymerization of actin, whereas it enhances it at low concentrations. In Olea europaea (Common olive), this protein is Profilin-4.